Here is a 257-residue protein sequence, read N- to C-terminus: Large ribosomal subunit protein uL2 (257 aa).

The disordered stretch occupies residues V207–A231.

It belongs to the universal ribosomal protein uL2 family. In terms of assembly, component of the large ribosomal subunit.

It localises to the cytoplasm. In terms of biological role, component of the large ribosomal subunit. The ribosome is a large ribonucleoprotein complex responsible for the synthesis of proteins in the cell. The protein is Large ribosomal subunit protein uL2 (rpl8) of Xenopus laevis (African clawed frog).